A 770-amino-acid polypeptide reads, in one-letter code: Elongation factor G, mitochondrial (770 aa).

Residues 1 to 24 constitute a mitochondrion transit peptide; that stretch reads MLKLSFRSLTSRLPRLSTLVVRGY. Residues 57–353 form the tr-type G domain; the sequence is KQIRNIGISA…AVCDYLPNPS (297 aa). Residues 66–73, 151–155, and 205–208 contribute to the GTP site; these read AHIDSGKT, DTPGH, and NKMD.

This sequence belongs to the TRAFAC class translation factor GTPase superfamily. Classic translation factor GTPase family. EF-G/EF-2 subfamily.

The protein localises to the mitochondrion. The protein operates within protein biosynthesis; polypeptide chain elongation. In terms of biological role, mitochondrial GTPase that catalyzes the GTP-dependent ribosomal translocation step during translation elongation. During this step, the ribosome changes from the pre-translocational (PRE) to the post-translocational (POST) state as the newly formed A-site-bound peptidyl-tRNA and P-site-bound deacylated tRNA move to the P and E sites, respectively. Catalyzes the coordinated movement of the two tRNA molecules, the mRNA and conformational changes in the ribosome. This Schizosaccharomyces pombe (strain 972 / ATCC 24843) (Fission yeast) protein is Elongation factor G, mitochondrial (mef1).